The primary structure comprises 149 residues: 1,4-dihydroxy-2-naphthoyl-CoA hydrolase (149 aa).

The active site involves aspartate 19.

It belongs to the 4-hydroxybenzoyl-CoA thioesterase family. DHNA-CoA hydrolase subfamily.

It catalyses the reaction 1,4-dihydroxy-2-naphthoyl-CoA + H2O = 1,4-dihydroxy-2-naphthoate + CoA + H(+). The protein operates within cofactor biosynthesis; phylloquinone biosynthesis. It participates in quinol/quinone metabolism; 1,4-dihydroxy-2-naphthoate biosynthesis; 1,4-dihydroxy-2-naphthoate from chorismate: step 7/7. Catalyzes the hydrolysis of 1,4-dihydroxy-2-naphthoyl-CoA (DHNA-CoA) to 1,4-dihydroxy-2-naphthoate (DHNA), a reaction involved in phylloquinone (vitamin K1) biosynthesis. The protein is 1,4-dihydroxy-2-naphthoyl-CoA hydrolase of Synechococcus sp. (strain CC9605).